The chain runs to 1078 residues: Exportin-1 (1078 aa).

In terms of domain architecture, Importin N-terminal spans 34–100 (AQQVLTQFQA…RNYIVAVMIK (67 aa)).

Belongs to the exportin family. As to quaternary structure, interacts with php4.

Its subcellular location is the nucleus. Receptor for the leucine-rich nuclear export signal (NES). The chain is Exportin-1 (xpo1) from Schizosaccharomyces pombe (strain 972 / ATCC 24843) (Fission yeast).